The sequence spans 262 residues: Cytochrome c oxidase subunit 3 (262 aa).

Transmembrane regions (helical) follow at residues 39-59, 83-103, 120-140, 163-183, 201-221, and 240-260; these read YTMT…YQWW, GMIL…WAFF, VGIA…ILLA, GLFF…YEYI, ATGF…ICFL, and AWYW…IYWW.

Belongs to the cytochrome c oxidase subunit 3 family. As to quaternary structure, component of the cytochrome c oxidase (complex IV, CIV), a multisubunit enzyme composed of a catalytic core of 3 subunits and several supernumerary subunits. The complex exists as a monomer or a dimer and forms supercomplexes (SCs) in the inner mitochondrial membrane with ubiquinol-cytochrome c oxidoreductase (cytochrome b-c1 complex, complex III, CIII).

The protein resides in the mitochondrion inner membrane. The catalysed reaction is 4 Fe(II)-[cytochrome c] + O2 + 8 H(+)(in) = 4 Fe(III)-[cytochrome c] + 2 H2O + 4 H(+)(out). In terms of biological role, component of the cytochrome c oxidase, the last enzyme in the mitochondrial electron transport chain which drives oxidative phosphorylation. The respiratory chain contains 3 multisubunit complexes succinate dehydrogenase (complex II, CII), ubiquinol-cytochrome c oxidoreductase (cytochrome b-c1 complex, complex III, CIII) and cytochrome c oxidase (complex IV, CIV), that cooperate to transfer electrons derived from NADH and succinate to molecular oxygen, creating an electrochemical gradient over the inner membrane that drives transmembrane transport and the ATP synthase. Cytochrome c oxidase is the component of the respiratory chain that catalyzes the reduction of oxygen to water. Electrons originating from reduced cytochrome c in the intermembrane space (IMS) are transferred via the dinuclear copper A center (CU(A)) of subunit 2 and heme A of subunit 1 to the active site in subunit 1, a binuclear center (BNC) formed by heme A3 and copper B (CU(B)). The BNC reduces molecular oxygen to 2 water molecules using 4 electrons from cytochrome c in the IMS and 4 protons from the mitochondrial matrix. This chain is Cytochrome c oxidase subunit 3 (COIII), found in Anopheles gambiae (African malaria mosquito).